The chain runs to 99 residues: Large ribosomal subunit protein bL28 (99 aa).

The protein belongs to the bacterial ribosomal protein bL28 family.

The chain is Large ribosomal subunit protein bL28 from Rhizobium leguminosarum bv. trifolii (strain WSM2304).